We begin with the raw amino-acid sequence, 290 residues long: ATP synthase gamma chain (290 aa).

The protein belongs to the ATPase gamma chain family. F-type ATPases have 2 components, CF(1) - the catalytic core - and CF(0) - the membrane proton channel. CF(1) has five subunits: alpha(3), beta(3), gamma(1), delta(1), epsilon(1). CF(0) has three main subunits: a, b and c.

The protein localises to the cell membrane. In terms of biological role, produces ATP from ADP in the presence of a proton gradient across the membrane. The gamma chain is believed to be important in regulating ATPase activity and the flow of protons through the CF(0) complex. The polypeptide is ATP synthase gamma chain (Akkermansia muciniphila (strain ATCC BAA-835 / DSM 22959 / JCM 33894 / BCRC 81048 / CCUG 64013 / CIP 107961 / Muc)).